The primary structure comprises 92 residues: Phospholemman (92 aa).

Residues 1-20 form the signal peptide; sequence MASLGHILVFCVGLLTMAKA. At 21–35 the chain is on the extracellular side; that stretch reads ESPKEHDPFTYDYQS. Residues 36–56 form a helical membrane-spanning segment; sequence LQIGGLVIAGILFILGILIVL. Over 57 to 92 the chain is Cytoplasmic; that stretch reads SRRCRCKFNQQQRTGEPDEEEGTFRSSIRRLSTRRR. A lipid anchor (S-palmitoyl cysteine) is attached at cysteine 60. The residue at position 62 (cysteine 62) is an S-glutathionyl cysteine; alternate. Cysteine 62 carries S-palmitoyl cysteine; alternate lipidation. Positions 65–92 are disordered; the sequence is NQQQRTGEPDEEEGTFRSSIRRLSTRRR. Threonine 79 carries the phosphothreonine modification. The residue at position 82 (serine 82) is a Phosphoserine. Serine 83 is modified (phosphoserine; by PKA and PKC). Residues 83–92 are compositionally biased toward basic residues; the sequence is SIRRLSTRRR. Serine 88 carries the post-translational modification Phosphoserine; by PKA. A Phosphothreonine; by PKC modification is found at threonine 89.

Belongs to the FXYD family. As to quaternary structure, homotetramer. Monomer. Regulatory subunit of the sodium/potassium-transporting ATPase (NKA) which is composed of a catalytic alpha subunit, an auxiliary non-catalytic beta subunit and an additional regulatory subunit. The monomeric form associates with NKA while the oligomeric form does not. Interacts with the catalytic alpha-1 subunit ATP1A1. Also interacts with the catalytic alpha-2 and alpha-3 subunits ATP1A2 and ATP1A3. Very little interaction with ATP1A1, ATP1A2 or ATP1A3 when phosphorylated at Ser-83. Interacts with the non-catalytic beta-1 subunit ATP1B1. Oxidative stress decreases interaction with ATP1A1 but increases interaction with ATP1B1. Major plasma membrane substrate for cAMP-dependent protein kinase (PKA) and protein kinase C (PKC) in several different tissues. Phosphorylated in response to insulin and adrenergic stimulation. Phosphorylation at Ser-88 stimulates sodium/potassium-transporting ATPase activity while the unphosphorylated form inhibits sodium/potassium-transporting ATPase activity. Phosphorylation increases tetramerization, decreases binding to ATP1A1 and reduces inhibition of ATP1A1 activity. Phosphorylation at Ser-83 leads to greatly reduced interaction with ATP1A1, ATP1A2 and ATP1A3. May be phosphorylated by DMPK. In terms of processing, palmitoylation increases half-life and stability and is enhanced upon phosphorylation at Ser-88 by PKA. In terms of tissue distribution, highest expression in skeletal muscle and heart. Moderate levels in brain, placenta, lung, liver, pancreas, uterus, bladder, prostate, small intestine and colon with mucosal lining. Very low levels in kidney, colon and small intestine without mucosa, prostate without endothelial lining, spleen, and testis.

It localises to the cell membrane. The protein localises to the sarcolemma. The protein resides in the apical cell membrane. Its subcellular location is the membrane. It is found in the caveola. It localises to the T-tubule. In terms of biological role, associates with and regulates the activity of the sodium/potassium-transporting ATPase (NKA) which transports Na(+) out of the cell and K(+) into the cell. Inhibits NKA activity in its unphosphorylated state and stimulates activity when phosphorylated. Reduces glutathionylation of the NKA beta-1 subunit ATP1B1, thus reversing glutathionylation-mediated inhibition of ATP1B1. Contributes to female sexual development by maintaining the excitability of neurons which secrete gonadotropin-releasing hormone. The polypeptide is Phospholemman (Homo sapiens (Human)).